Here is a 557-residue protein sequence, read N- to C-terminus: Eukaryotic translation initiation factor 3 subunit D-2 (557 aa).

An RNA gate region spans residues 292–306 (QFDMLTVNETALEPP). The segment at 533 to 557 (FDSDNNDGEETSDDRPFLNSKDNKL) is disordered. The span at 545–557 (DDRPFLNSKDNKL) shows a compositional bias: basic and acidic residues.

It belongs to the eIF-3 subunit D family. Component of the eukaryotic translation initiation factor 3 (eIF-3) complex. The eIF-3 complex interacts with pix.

The protein resides in the cytoplasm. MRNA cap-binding component of the eukaryotic translation initiation factor 3 (eIF-3) complex, which is involved in protein synthesis of a specialized repertoire of mRNAs and, together with other initiation factors, stimulates binding of mRNA and methionyl-tRNAi to the 40S ribosome. The eIF-3 complex specifically targets and initiates translation of a subset of mRNAs involved in cell proliferation. In the eIF-3 complex, eif3d specifically recognizes and binds the 7-methylguanosine cap of a subset of mRNAs. This Drosophila grimshawi (Hawaiian fruit fly) protein is Eukaryotic translation initiation factor 3 subunit D-2.